Here is a 537-residue protein sequence, read N- to C-terminus: Syncytin-2 (537 aa).

An N-terminal signal peptide occupies residues 1–15; the sequence is MGLLLLVLILTPLLA. The Extracellular segment spans residues 16–478; sequence AYRHPDFPLL…GWLNWEGTWK (463 aa). Residues 43–46 carry the CXXC motif; that stretch reads CWLC. Intrachain disulfides connect cysteine 43/cysteine 46, cysteine 43/cysteine 439, and cysteine 431/cysteine 438. Asparagine 133, asparagine 146, asparagine 177, asparagine 220, asparagine 241, asparagine 247, asparagine 312, and asparagine 332 each carry an N-linked (GlcNAc...) asparagine glycan. The segment at 354–374 is fusion peptide; the sequence is FIPLLAGLGILAGTGTGIAGI. The short motif at 414–430 is the CKS-17 element; sequence LQNRRGLDMLTAAQGGI. Residues 431–439 carry the CX6CC motif; it reads CLALDEKCC. N-linked (GlcNAc...) asparagine glycosylation is present at asparagine 443. A helical transmembrane segment spans residues 479-499; it reads WFSWVLPFIGPLVSLLLLLLF. Topologically, residues 500-537 are cytoplasmic; the sequence is GPCLLNLITQFVSSRLQAIKLQTNGAGCRPRNIQESPF.

Belongs to the gamma type-C retroviral envelope protein family. HERV class-I FRD env subfamily. In terms of assembly, the surface and transmembrane proteins form a heterodimer. They are attached by non-covalent interactions or by a labile interchain disulfide bond. Specific enzymatic cleavages in vivo yield the mature SU and TM proteins. Post-translationally, the CXXC motif is highly conserved across a broad range of retroviral envelope proteins. It is thought to participate in the formation of a labile disulfide bond possibly with the CX6CC motif present in the transmembrane protein.

It localises to the virion. Its subcellular location is the cell membrane. In terms of biological role, this endogenous retroviral envelope protein has retained its original fusogenic properties and participates in trophoblast fusion and the formation of a syncytium during placenta morphogenesis. The interaction with MFSD2A is apparently important for this process. Endogenous envelope proteins may have kept, lost or modified their original function during evolution but this one can still make pseudotypes with MLV, HIV-1 or SIV-1 virions and confer infectivity. Retroviral envelope proteins mediate receptor recognition and membrane fusion during early infection. The surface protein mediates receptor recognition, while the transmembrane protein anchors the envelope heterodimer to the viral membrane through one transmembrane domain. The other hydrophobic domain, called fusion peptide, mediates fusion of the viral membrane with the target cell membrane. This chain is Syncytin-2 (ERVFRD-1), found in Macaca fascicularis (Crab-eating macaque).